Consider the following 271-residue polypeptide: NADH-quinone oxidoreductase subunit B (271 aa).

[4Fe-4S] cluster contacts are provided by C37, C38, C103, and C132. Residues 227–271 (LAPPSVFGRAKRIPVDPKPSDEARAHGPGPTTESIGDVDGPDRGI) form a disordered region. Basic and acidic residues predominate over residues 239-251 (IPVDPKPSDEARA).

Belongs to the complex I 20 kDa subunit family. As to quaternary structure, NDH-1 is composed of 14 different subunits. Subunits NuoB, C, D, E, F, and G constitute the peripheral sector of the complex. The cofactor is [4Fe-4S] cluster.

The protein localises to the cell membrane. The catalysed reaction is a quinone + NADH + 5 H(+)(in) = a quinol + NAD(+) + 4 H(+)(out). In terms of biological role, NDH-1 shuttles electrons from NADH, via FMN and iron-sulfur (Fe-S) centers, to quinones in the respiratory chain. The immediate electron acceptor for the enzyme in this species is believed to be a menaquinone. Couples the redox reaction to proton translocation (for every two electrons transferred, four hydrogen ions are translocated across the cytoplasmic membrane), and thus conserves the redox energy in a proton gradient. This is NADH-quinone oxidoreductase subunit B from Frankia casuarinae (strain DSM 45818 / CECT 9043 / HFP020203 / CcI3).